Reading from the N-terminus, the 736-residue chain is Fidgetin (736 aa).

Disordered stretches follow at residues 118-155 (GMTP…CGNH), 180-248 (TYSG…YSPG), 272-295 (IPGY…GSSA), and 341-438 (STRG…AEEQ). The span at 128–150 (VTASVGSSTGVASSLSEPSYSSS) shows a compositional bias: low complexity. Residues 205 to 214 (QPPPPPPPTL) show a composition bias toward pro residues. Residues 216–232 (PSYNTSSPNLSSYNYPP) show a composition bias toward low complexity. The segment covering 352–368 (DTSSLAFKPTKQSMPTD) has biased composition (polar residues). Residues A467 and 507–512 (GTGRTL) each bind ATP.

Belongs to the AAA ATPase family.

It is found in the nucleus matrix. It localises to the cytoplasm. The protein localises to the cytoskeleton. Its subcellular location is the microtubule organizing center. The protein resides in the centrosome. Its function is as follows. ATP-dependent microtubule severing protein. Severs microtubules along their length and depolymerizes their ends, primarily the minus-end, suppressing microtubule growth from and attachment to centrosomes. Microtubule severing may promote rapid reorganization of cellular microtubule arrays and the release of microtubules from the centrosome following nucleation. Microtubule release from the mitotic spindle poles may allow depolymerization of the microtubule end proximal to the spindle pole, leading to poleward microtubule flux and poleward motion of chromosome. The chain is Fidgetin (fign) from Danio rerio (Zebrafish).